Reading from the N-terminus, the 262-residue chain is Putative dimethyl sulfoxide reductase iron-sulfur subunit B (262 aa).

3 consecutive 4Fe-4S ferredoxin-type domains span residues 4-34, 62-93, and 94-123; these read YGLVIDQERCIGCQSCSLTCKQENNVPMGQF, LEMTYQPTACQHCENAPCVKVCPVNATYTRDD, and GIVEIDYDKCMGCRYCMAACPYNARVFNWD. Residues Cys13, Cys16, Cys19, Cys23, Cys71, Cys74, Cys79, Cys83, Cys103, Cys106, Cys109, Cys113, Cys147, Cys150, Cys162, and Cys166 each coordinate [4Fe-4S] cluster. Residues 209 to 262 form a disordered region; sequence NGEMSPGRPWKSKKLESELDDDEAAKAARRRSGSVENGYDVTPHVPAETAGGDD.

As to quaternary structure, probable multiprotein complex that likely consists of DmsA, DmsB and DmsC. Requires [4Fe-4S] cluster as cofactor.

The protein localises to the cell membrane. Dimethyl sulfoxide (DMSO) reductase catalyzes the reduction of dimethyl sulfoxide (DMSO) to dimethyl sulfide (DMS) during anaerobic respiration; it can also use trimethylamine N-oxide (TMAO) as terminal electron acceptor. Subunit B is proposed to be involved in electron transfer. This Halobacterium salinarum (strain ATCC 700922 / JCM 11081 / NRC-1) (Halobacterium halobium) protein is Putative dimethyl sulfoxide reductase iron-sulfur subunit B (dmsB).